The primary structure comprises 288 residues: UPF0494 membrane protein C212.04c (288 aa).

4 helical membrane-spanning segments follow: residues 107–127 (WVLL…KFKI), 144–164 (IWGP…AFNY), 174–194 (PLIS…SVII), and 198–218 (IAGV…GVIA).

The protein belongs to the UPF0494 family.

Its subcellular location is the cytoplasm. The protein resides in the endoplasmic reticulum. The protein localises to the membrane. This Schizosaccharomyces pombe (strain 972 / ATCC 24843) (Fission yeast) protein is UPF0494 membrane protein C212.04c.